A 198-amino-acid polypeptide reads, in one-letter code: A-type ATP synthase subunit E (198 aa).

It belongs to the V-ATPase E subunit family. As to quaternary structure, has multiple subunits with at least A(3), B(3), C, D, E, F, H, I and proteolipid K(x).

It is found in the cell membrane. Functionally, component of the A-type ATP synthase that produces ATP from ADP in the presence of a proton gradient across the membrane. This Pyrococcus horikoshii (strain ATCC 700860 / DSM 12428 / JCM 9974 / NBRC 100139 / OT-3) protein is A-type ATP synthase subunit E.